The chain runs to 493 residues: 3-ketoacyl-CoA synthase 16 (493 aa).

Positions 1–35 (MDYPMKKVKIFFNYLMAHRFKLCFLPLMVAIAVEA) are cleaved as a signal peptide. The helical transmembrane segment at 52–74 (NNHTSLTMFFLYLALGSTLYLMT) threads the bilayer. Residues 71-366 (YLMTRPKPVY…FFVRFVKKKF (296 aa)) form the FAE domain. Catalysis depends on residues cysteine 221, histidine 300, histidine 384, histidine 388, histidine 417, and asparagine 421.

It belongs to the thiolase-like superfamily. Chalcone/stilbene synthases family. As to expression, expressed in siliques.

It localises to the membrane. The catalysed reaction is a very-long-chain acyl-CoA + malonyl-CoA + H(+) = a very-long-chain 3-oxoacyl-CoA + CO2 + CoA. It participates in lipid metabolism; fatty acid biosynthesis. This is 3-ketoacyl-CoA synthase 16 from Arabidopsis thaliana (Mouse-ear cress).